The sequence spans 433 residues: Enolase (433 aa).

A (2R)-2-phosphoglycerate-binding site is contributed by Gln-166. Residue Glu-208 is the Proton donor of the active site. Asp-245, Glu-290, and Asp-317 together coordinate Mg(2+). Residues Lys-342, Arg-371, Ser-372, and Lys-393 each coordinate (2R)-2-phosphoglycerate. Lys-342 acts as the Proton acceptor in catalysis.

Belongs to the enolase family. The cofactor is Mg(2+).

Its subcellular location is the cytoplasm. The protein resides in the secreted. It is found in the cell surface. It catalyses the reaction (2R)-2-phosphoglycerate = phosphoenolpyruvate + H2O. It functions in the pathway carbohydrate degradation; glycolysis; pyruvate from D-glyceraldehyde 3-phosphate: step 4/5. Catalyzes the reversible conversion of 2-phosphoglycerate (2-PG) into phosphoenolpyruvate (PEP). It is essential for the degradation of carbohydrates via glycolysis. The protein is Enolase of Clostridium novyi (strain NT).